A 535-amino-acid polypeptide reads, in one-letter code: MSSKVITSLMAESILLSKVGQVISGYSPITVFLLGSILIFLVVYNKRRSRLVKYIEKIPGPAAMPFLGNAIEMNVDHDELFNRVIGMQKLWGTRIGINRVWQGTAPRVLLFEPETVEPILNSQKFVNKSHDYDYLHPWLGEGLLTSTDRKWHSRRKILTPAFHFKILDDFIDVFNEQSAVLARKLAVEVGSEAFNLFPYVTLCTLDIVCETAMGRRIYAQSNSESEYVKAVYGIGSIVQSRQAKIWLQSDFIFSLTAEYKLHQSYINTLHGFSNMVIRERKAELAILQENNNNNNNNAPDAYDDVGKKKRLAFLDLLIDASKEGTVLSNEDIREEVDTFMFEGHDTTSAAISWTLFLLGCHPEYQERVVEELDSIFGDDKETPATMKNLMDMRYLECCIKDSLRLFPSVPMMARMVGEDVNIGGKIVPAGTQAIIMTYALHRNPRVFPKPEQFNPDNFLPENCAGRHPFAYIPFSAGPRNCIGQKFAILEEKAVISTVLRKYKIEAVDRREDLTLLGELILRPKDGLRVKITPRD.

Positions 342 and 481 each coordinate heme.

The protein belongs to the cytochrome P450 family. The cofactor is heme.

It localises to the endoplasmic reticulum membrane. It is found in the microsome membrane. Its function is as follows. May be involved in the metabolism of insect hormones and in the breakdown of synthetic insecticides. The sequence is that of Cytochrome P450 4c3 (Cyp4c3) from Drosophila melanogaster (Fruit fly).